The primary structure comprises 259 residues: Thiazole synthase (259 aa).

Lys-98 functions as the Schiff-base intermediate with DXP in the catalytic mechanism. 1-deoxy-D-xylulose 5-phosphate is bound by residues Gly-159, 185-186, and 207-208; these read AG and NS.

Belongs to the ThiG family. In terms of assembly, homotetramer. Forms heterodimers with either ThiH or ThiS.

It localises to the cytoplasm. The enzyme catalyses [ThiS sulfur-carrier protein]-C-terminal-Gly-aminoethanethioate + 2-iminoacetate + 1-deoxy-D-xylulose 5-phosphate = [ThiS sulfur-carrier protein]-C-terminal Gly-Gly + 2-[(2R,5Z)-2-carboxy-4-methylthiazol-5(2H)-ylidene]ethyl phosphate + 2 H2O + H(+). It functions in the pathway cofactor biosynthesis; thiamine diphosphate biosynthesis. Functionally, catalyzes the rearrangement of 1-deoxy-D-xylulose 5-phosphate (DXP) to produce the thiazole phosphate moiety of thiamine. Sulfur is provided by the thiocarboxylate moiety of the carrier protein ThiS. In vitro, sulfur can be provided by H(2)S. This chain is Thiazole synthase, found in Chlorobium phaeobacteroides (strain DSM 266 / SMG 266 / 2430).